We begin with the raw amino-acid sequence, 378 residues long: Carbazole 1,9a-dioxygenase, terminal oxygenase component CarAa (378 aa).

The 107-residue stretch at 29-135 folds into the Rieske domain; it reads WYPVRLASEI…VEEAKGLIFV (107 aa). [2Fe-2S] cluster contacts are provided by Cys-69, His-71, Cys-90, and His-93.

In terms of assembly, homotrimer. Carbazole 1,9a-dioxygenase complex consists of a terminal oxygenase component CarAa, a ferredoxin reductase component fdr and a ferredoxin component CarAc. The cofactor is [2Fe-2S] cluster.

It carries out the reaction 9H-carbazole + NADH + O2 + H(+) = 2'-aminobiphenyl-2,3-diol + NAD(+). The catalysed reaction is 9H-carbazole + NADPH + O2 + H(+) = 2'-aminobiphenyl-2,3-diol + NADP(+). Part of the multicomponent carbazole 1,9a-dioxygenase (CARDO), that converts carbazole (CAR) into 2-aminobiphenyl-2,3-diol. Catalyzes the dioxygenation at the angular (C-9a) and adjacent (C-1) positions of carbazole to yield a highly unstable cis-hydrodiol intermediate which is spontaneously converted to 2-aminobiphenyl-2,3-diol. This Sphingomonas sp protein is Carbazole 1,9a-dioxygenase, terminal oxygenase component CarAa (carAa).